The primary structure comprises 449 residues: MQVTETQAEGLKRAYTVVLPAAELDAKAQDRLVELKDKVRINGFRPGKVPLSHLKSLYGKSVMAEVIEQAVTEANGKIVEDNGLRLALPPKVELPQAEDEVKSVIEGQADLKYTVELEVLPKIELGNFKDIAIEKPVAIVTDEEVDEMVKRIADGNRSFDAKEGAAASGDRITVDFVGSIDGVPFEGGAGEDVPVVIGSNSFIPGFEEQLIGLSAGEERTINVTFPTNYLSAQLAGKDASFAVKAKQVEAPGELTIDDEFAKTLGLESLDKLKENVRERIAKEHEGATRQRVKRQLLDALDAGHKFDVPPTLVSQEFEGVWQQIQTDLQQQGRTFADESTTEEEARAEYQRIAERRVRLGLVLAEIGERNNIQVTDDEVTRAVVERARQFPGQEQQVWEYYRRNAQAMASLRAPLFEEKVVDFLLELAKVTEKQVSREELYKEEEEKAA.

The region spanning 169–254 (GDRITVDFVG…AKQVEAPGEL (86 aa)) is the PPIase FKBP-type domain.

It belongs to the FKBP-type PPIase family. Tig subfamily.

It is found in the cytoplasm. It catalyses the reaction [protein]-peptidylproline (omega=180) = [protein]-peptidylproline (omega=0). In terms of biological role, involved in protein export. Acts as a chaperone by maintaining the newly synthesized protein in an open conformation. Functions as a peptidyl-prolyl cis-trans isomerase. The sequence is that of Trigger factor from Azorhizobium caulinodans (strain ATCC 43989 / DSM 5975 / JCM 20966 / LMG 6465 / NBRC 14845 / NCIMB 13405 / ORS 571).